The chain runs to 86 residues: RNA-binding protein Hfq (86 aa).

In terms of domain architecture, Sm spans D9–V68. A disordered region spans residues R66–A86.

Belongs to the Hfq family. Homohexamer.

Functionally, RNA chaperone that binds small regulatory RNA (sRNAs) and mRNAs to facilitate mRNA translational regulation in response to envelope stress, environmental stress and changes in metabolite concentrations. Also binds with high specificity to tRNAs. The protein is RNA-binding protein Hfq of Ectopseudomonas mendocina (strain ymp) (Pseudomonas mendocina).